The primary structure comprises 36 residues: Peptide POLARIS (36 aa).

Belongs to the POLARIS peptide family. Mostly expressed in the embryonic root from the heart stage and in the seedling primary and lateral root tips, especially in the columella initials and lateral root cap. Also detectable in aerial parts of the seedling, sepals and leaves, principally in vascular tissues of the lamina and petiole.

Its function is as follows. Required for correct root growth and vascular development, probably by modulating both cell division rate in meristems and cell elongation in roots. Negative regulator of the ethylene signaling pathway that modulates microtubule cytoskeleton dynamics and auxin transport and homeostasis, and possibly cytokinin signaling, thus influencing root growth and lateral root development. The sequence is that of Peptide POLARIS (PLS) from Arabidopsis thaliana (Mouse-ear cress).